Consider the following 325-residue polypeptide: Inactive S-adenosylmethionine decarboxylase prozyme (325 aa).

It belongs to the eukaryotic AdoMetDC family. As to quaternary structure, forms a heterodimer with S-adenosylmethionine decarboxylase AdoMetDC; heterodimerization is required to activate AdoMetDC.

Its pathway is amine and polyamine biosynthesis; S-adenosylmethioninamine biosynthesis; S-adenosylmethioninamine from S-adenosyl-L-methionine: step 1/1. Functionally, probably has no catalytic activity due to the loss of several residues required for processing and catalysis. Forms a complex with S-adenosylmethionine decarboxylase AdoMetDC which is essential to activate AdoMetDC. Required for the biosynthesis of the polyamine spermidine. Required for growth and survival during the bloodstream life cycle stage. This chain is Inactive S-adenosylmethionine decarboxylase prozyme, found in Trypanosoma brucei brucei.